Reading from the N-terminus, the 251-residue chain is Ubiquinone/menaquinone biosynthesis C-methyltransferase UbiE (251 aa).

Residues Thr-74, Asp-95, 123–124, and Ser-140 contribute to the S-adenosyl-L-methionine site; that span reads NA.

It belongs to the class I-like SAM-binding methyltransferase superfamily. MenG/UbiE family.

The catalysed reaction is a 2-demethylmenaquinol + S-adenosyl-L-methionine = a menaquinol + S-adenosyl-L-homocysteine + H(+). It carries out the reaction a 2-methoxy-6-(all-trans-polyprenyl)benzene-1,4-diol + S-adenosyl-L-methionine = a 5-methoxy-2-methyl-3-(all-trans-polyprenyl)benzene-1,4-diol + S-adenosyl-L-homocysteine + H(+). The protein operates within quinol/quinone metabolism; menaquinone biosynthesis; menaquinol from 1,4-dihydroxy-2-naphthoate: step 2/2. Its pathway is cofactor biosynthesis; ubiquinone biosynthesis. Its function is as follows. Methyltransferase required for the conversion of demethylmenaquinol (DMKH2) to menaquinol (MKH2) and the conversion of 2-polyprenyl-6-methoxy-1,4-benzoquinol (DDMQH2) to 2-polyprenyl-3-methyl-6-methoxy-1,4-benzoquinol (DMQH2). The chain is Ubiquinone/menaquinone biosynthesis C-methyltransferase UbiE from Cronobacter sakazakii (strain ATCC BAA-894) (Enterobacter sakazakii).